The chain runs to 261 residues: 14-3-3-like protein B (261 aa).

Positions 237-261 are disordered; sequence DIPEDGEDSQKANGTAKFGGGDDAE.

This sequence belongs to the 14-3-3 family.

The sequence is that of 14-3-3-like protein B from Vicia faba (Broad bean).